Here is a 360-residue protein sequence, read N- to C-terminus: Phospho-N-acetylmuramoyl-pentapeptide-transferase (360 aa).

Transmembrane regions (helical) follow at residues Ala26–Ala46, Pro72–Tyr92, Ser94–Val114, Trp132–Gly152, Val168–Gly188, Gly199–Thr219, Ala236–Phe256, Val263–Leu283, Phe288–Val308, and Val338–Lys358.

The protein belongs to the glycosyltransferase 4 family. MraY subfamily. Mg(2+) serves as cofactor.

It is found in the cell inner membrane. It carries out the reaction UDP-N-acetyl-alpha-D-muramoyl-L-alanyl-gamma-D-glutamyl-meso-2,6-diaminopimeloyl-D-alanyl-D-alanine + di-trans,octa-cis-undecaprenyl phosphate = di-trans,octa-cis-undecaprenyl diphospho-N-acetyl-alpha-D-muramoyl-L-alanyl-D-glutamyl-meso-2,6-diaminopimeloyl-D-alanyl-D-alanine + UMP. The protein operates within cell wall biogenesis; peptidoglycan biosynthesis. Its function is as follows. Catalyzes the initial step of the lipid cycle reactions in the biosynthesis of the cell wall peptidoglycan: transfers peptidoglycan precursor phospho-MurNAc-pentapeptide from UDP-MurNAc-pentapeptide onto the lipid carrier undecaprenyl phosphate, yielding undecaprenyl-pyrophosphoryl-MurNAc-pentapeptide, known as lipid I. The chain is Phospho-N-acetylmuramoyl-pentapeptide-transferase from Cronobacter sakazakii (strain ATCC BAA-894) (Enterobacter sakazakii).